The primary structure comprises 689 residues: Glycine--tRNA ligase beta subunit (689 aa).

It belongs to the class-II aminoacyl-tRNA synthetase family. In terms of assembly, tetramer of two alpha and two beta subunits.

It localises to the cytoplasm. The catalysed reaction is tRNA(Gly) + glycine + ATP = glycyl-tRNA(Gly) + AMP + diphosphate. This is Glycine--tRNA ligase beta subunit from Shigella boydii serotype 18 (strain CDC 3083-94 / BS512).